Consider the following 424-residue polypeptide: Hemagglutinin-esterase (424 aa).

An N-terminal signal peptide occupies residues 1–16; sequence MFLLPRFILVSCIIGS. The tract at residues 7 to 127 is esterase domain 1; the sequence is FILVSCIIGS…SNDIWMQNKG (121 aa). Residues 17–392 lie on the Virion surface side of the membrane; it reads LGFYNPPTNV…PICVYDPLPV (376 aa). The active-site Nucleophile is S40. A disulfide bridge links C44 with C65. 6 N-linked (GlcNAc...) asparagine; by host glycosylation sites follow: N54, N89, N114, N153, N236, and N301. 3 disulfides stabilise this stretch: C113-C162, C197-C276, and C205-C249. The receptor binding stretch occupies residues 128 to 266; it reads LFYTQVYKNM…GNYLAISNEL (139 aa). Residues 267-379 are esterase domain 2; sequence LLTVPTKAIC…RCPTAADINN (113 aa). A disulfide bridge links C307 with C312. N316 carries N-linked (GlcNAc...) asparagine; by host glycosylation. Catalysis depends on charge relay system residues D326 and H329. A disulfide bridge links C347 with C371. N358 carries N-linked (GlcNAc...) asparagine; by host glycosylation. The chain crosses the membrane as a helical span at residues 393–413; it reads ILLGILLGVAVIIIVVLLLYF. Topologically, residues 414 to 424 are intravirion; the sequence is MVDNGTRLHDA. A glycan (N-linked (GlcNAc...) asparagine; by host) is linked at N417.

It belongs to the influenza type C/coronaviruses hemagglutinin-esterase family. In terms of assembly, homodimer; disulfide-linked. Forms a complex with the M protein in the pre-Golgi. Associates then with S-M complex to form a ternary complex S-M-HE. N-glycosylated in the host RER.

The protein localises to the virion membrane. It localises to the host cell membrane. The enzyme catalyses N-acetyl-9-O-acetylneuraminate + H2O = N-acetylneuraminate + acetate + H(+). The catalysed reaction is N-acetyl-4-O-acetylneuraminate + H2O = N-acetylneuraminate + acetate + H(+). Functionally, structural protein that makes short spikes at the surface of the virus. Contains receptor binding and receptor-destroying activities. Mediates de-O-acetylation of N-acetyl-4-O-acetylneuraminic acid, which is probably the receptor determinant recognized by the virus on the surface of erythrocytes and susceptible cells. This receptor-destroying activity is important for virus release as it probably helps preventing self-aggregation and ensures the efficient spread of the progeny virus from cell to cell. May serve as a secondary viral attachment protein for initiating infection, the spike protein being the major one. May become a target for both the humoral and the cellular branches of the immune system. The polypeptide is Hemagglutinin-esterase (Homo sapiens (Human)).